Reading from the N-terminus, the 401-residue chain is Argininosuccinate synthase (401 aa).

8–16 (AYSGGLDTS) contacts ATP. L-citrulline-binding residues include tyrosine 86 and serine 91. Glycine 116 contacts ATP. Residues threonine 118, asparagine 122, and aspartate 123 each contribute to the L-aspartate site. Asparagine 122 is an L-citrulline binding site. Arginine 126, serine 175, serine 184, glutamate 260, and tyrosine 272 together coordinate L-citrulline.

The protein belongs to the argininosuccinate synthase family. Type 1 subfamily. As to quaternary structure, homotetramer.

Its subcellular location is the cytoplasm. It carries out the reaction L-citrulline + L-aspartate + ATP = 2-(N(omega)-L-arginino)succinate + AMP + diphosphate + H(+). It participates in amino-acid biosynthesis; L-arginine biosynthesis; L-arginine from L-ornithine and carbamoyl phosphate: step 2/3. This chain is Argininosuccinate synthase, found in Clostridium kluyveri (strain ATCC 8527 / DSM 555 / NBRC 12016 / NCIMB 10680 / K1).